We begin with the raw amino-acid sequence, 122 residues long: uncharacterized protein (122 aa).

A helical membrane pass occupies residues 9–25 (AFPSPVFLGGVFFVFFF).

It localises to the cytoplasm. The protein resides in the nucleus. It is found in the membrane. This is an uncharacterized protein from Saccharomyces cerevisiae (strain ATCC 204508 / S288c) (Baker's yeast).